Consider the following 576-residue polypeptide: Proline--tRNA ligase (576 aa).

The protein belongs to the class-II aminoacyl-tRNA synthetase family. ProS type 1 subfamily. Homodimer.

It is found in the cytoplasm. The catalysed reaction is tRNA(Pro) + L-proline + ATP = L-prolyl-tRNA(Pro) + AMP + diphosphate. Functionally, catalyzes the attachment of proline to tRNA(Pro) in a two-step reaction: proline is first activated by ATP to form Pro-AMP and then transferred to the acceptor end of tRNA(Pro). As ProRS can inadvertently accommodate and process non-cognate amino acids such as alanine and cysteine, to avoid such errors it has two additional distinct editing activities against alanine. One activity is designated as 'pretransfer' editing and involves the tRNA(Pro)-independent hydrolysis of activated Ala-AMP. The other activity is designated 'posttransfer' editing and involves deacylation of mischarged Ala-tRNA(Pro). The misacylated Cys-tRNA(Pro) is not edited by ProRS. The polypeptide is Proline--tRNA ligase (Psychrobacter sp. (strain PRwf-1)).